The following is a 265-amino-acid chain: Endochitinase At2g43580 (265 aa).

The first 24 residues, 1 to 24, serve as a signal peptide directing secretion; the sequence is MALTKIFLILLLSLLGLYSETVKS. The Chitin-binding type-1 domain maps to 25–59; the sequence is QNCDCAPNLCCSQFGYCGTTADYCGSTCQSGPCRV. Cystine bridges form between Cys-27–Cys-35, Cys-29–Cys-41, Cys-34–Cys-48, and Cys-52–Cys-57. The catalytic stretch occupies residues 67–265; the sequence is GLVGNIVTQI…GLDPGANITC (199 aa). Asn-102 is a glycosylation site (N-linked (GlcNAc...) asparagine). The Proton donor role is filled by Glu-129. Residue Asn-262 is glycosylated (N-linked (GlcNAc...) asparagine).

It belongs to the glycosyl hydrolase 19 family. Chitinase class I subfamily.

The catalysed reaction is Random endo-hydrolysis of N-acetyl-beta-D-glucosaminide (1-&gt;4)-beta-linkages in chitin and chitodextrins.. This chain is Endochitinase At2g43580, found in Arabidopsis thaliana (Mouse-ear cress).